Reading from the N-terminus, the 142-residue chain is Galectin-10 (142 aa).

Serine 2 carries the N-acetylserine modification. In terms of domain architecture, Galectin spans 6-138; the sequence is VPYTEAASLS…DISLTKFNVS (133 aa).

In terms of assembly, interacts with CEL. Expressed abundantly in the bone marrow. Expressed exclusively by eosinophils and basophils. Not detected in monocytes and neutrophils. Expressed in CD25-positive regulatory T-cells (Treg) (at protein level). Found in intestinal tissue from patients with Celiac disease, expression is directly related to the histological grade of mucosal damage and to the number of eosinophils found in the duodenal lesion (at protein level). Found in sputum of patients with eosinophilic inflammatory diseases such as asthma (at protein level).

It localises to the cytoplasm. It is found in the cytosol. The protein resides in the cytoplasmic granule. Its function is as follows. Regulates immune responses through the recognition of cell-surface glycans. Essential for the anergy and suppressive function of CD25-positive regulatory T-cells (Treg). This chain is Galectin-10 (CLC), found in Homo sapiens (Human).